A 416-amino-acid chain; its full sequence is UDP-N-acetylglucosamine 1-carboxyvinyltransferase (416 aa).

Phosphoenolpyruvate is bound at residue 22–23 (KN). Position 92 (Arg92) interacts with UDP-N-acetyl-alpha-D-glucosamine. The active-site Proton donor is Cys116. Cys116 is modified (2-(S-cysteinyl)pyruvic acid O-phosphothioketal). Residues 121–125 (RPIDQ), Asp304, and Ile326 contribute to the UDP-N-acetyl-alpha-D-glucosamine site.

It belongs to the EPSP synthase family. MurA subfamily.

It is found in the cytoplasm. It catalyses the reaction phosphoenolpyruvate + UDP-N-acetyl-alpha-D-glucosamine = UDP-N-acetyl-3-O-(1-carboxyvinyl)-alpha-D-glucosamine + phosphate. The protein operates within cell wall biogenesis; peptidoglycan biosynthesis. Functionally, cell wall formation. Adds enolpyruvyl to UDP-N-acetylglucosamine. In Desulfatibacillum aliphaticivorans, this protein is UDP-N-acetylglucosamine 1-carboxyvinyltransferase.